Here is a 475-residue protein sequence, read N- to C-terminus: 3-keto-steroid reductase ERG27 (475 aa).

4 residues coordinate NADP(+): I32, I55, T59, and K65. Catalysis depends on proton donor residues S249 and Y272. The NADP(+) site is built by Y272, K276, V324, and S326. K276 functions as the Lowers pKa of active site Tyr in the catalytic mechanism.

The protein belongs to the short-chain dehydrogenases/reductases (SDR) family. ERG27 subfamily. As to quaternary structure, heterotetramer of ERG25, ERG26, ERG27 and ERG28. ERG28 acts as a scaffold to tether ERG27 and other 4,4-demethylation-related enzymes, forming a demethylation enzyme complex, in the endoplasmic reticulum.

The protein resides in the endoplasmic reticulum membrane. Its subcellular location is the lipid droplet. It functions in the pathway steroid metabolism; ergosterol biosynthesis. Its function is as follows. 3-keto-steroid reductase; part of the third module of ergosterol biosynthesis pathway that includes the late steps of the pathway. ERG27 is a catalytic component of the C-4 demethylation complex that catalyzes the conversion of 4,4-dimethylfecosterol into fecosterol via 4-methylfecosterol. The third module or late pathway involves the ergosterol synthesis itself through consecutive reactions that mainly occur in the endoplasmic reticulum (ER) membrane. Firstly, the squalene synthase ERG9 catalyzes the condensation of 2 farnesyl pyrophosphate moieties to form squalene, which is the precursor of all steroids. Squalene synthase is crucial for balancing the incorporation of farnesyl diphosphate (FPP) into sterol and nonsterol isoprene synthesis. Secondly, squalene is converted into lanosterol by the consecutive action of the squalene epoxidase ERG1 and the lanosterol synthase ERG7. Then, the delta(24)-sterol C-methyltransferase ERG6 methylates lanosterol at C-24 to produce eburicol. Eburicol is the substrate of the sterol 14-alpha demethylase encoded by CYP51A, CYP51B and CYP51C, to yield 4,4,24-trimethyl ergosta-8,14,24(28)-trienol. CYP51B encodes the enzyme primarily responsible for sterol 14-alpha-demethylation, and plays an essential role in ascospore formation. CYP51A encodes an additional sterol 14-alpha-demethylase, induced on ergosterol depletion and responsible for the intrinsic variation in azole sensitivity. The third CYP51 isoform, CYP51C, does not encode a sterol 14-alpha-demethylase, but is required for full virulence on host wheat ears. The C-14 reductase ERG24 then reduces the C14=C15 double bond which leads to 4,4-dimethylfecosterol. A sequence of further demethylations at C-4, involving the C-4 demethylation complex containing the C-4 methylsterol oxidases ERG25, the sterol-4-alpha-carboxylate 3-dehydrogenase ERG26 and the 3-keto-steroid reductase ERG27, leads to the production of fecosterol via 4-methylfecosterol. ERG28 has a role as a scaffold to help anchor ERG25, ERG26 and ERG27 to the endoplasmic reticulum. The C-8 sterol isomerase ERG2 then catalyzes the reaction which results in unsaturation at C-7 in the B ring of sterols and thus converts fecosterol to episterol. The sterol-C5-desaturases ERG3A and ERG3BB then catalyze the introduction of a C-5 double bond in the B ring to produce 5-dehydroepisterol. The C-22 sterol desaturases ERG5A and ERG5B further convert 5-dehydroepisterol into ergosta-5,7,22,24(28)-tetraen-3beta-ol by forming the C-22(23) double bond in the sterol side chain. Finally, ergosta-5,7,22,24(28)-tetraen-3beta-ol is substrate of the C-24(28) sterol reductase ERG4 to produce ergosterol. In Gibberella zeae (strain ATCC MYA-4620 / CBS 123657 / FGSC 9075 / NRRL 31084 / PH-1) (Wheat head blight fungus), this protein is 3-keto-steroid reductase ERG27.